The primary structure comprises 394 residues: Shematrin-like protein 2 (394 aa).

Residues methionine 1–alanine 19 form the signal peptide.

As to expression, prismatic layer of shell (at protein level). Expressed primarily in the mantle with highest level in the mantle edge and lower level in the mantle pallium.

The protein localises to the secreted. This chain is Shematrin-like protein 2, found in Pinctada maxima (Silver-lipped pearl oyster).